Reading from the N-terminus, the 394-residue chain is Chaperone protein DnaJ (394 aa).

Positions 6-71 (DYYEVLEVTK…DKRARYDQFG (66 aa)) constitute a J domain. The CR-type zinc-finger motif lies at 152-234 (GVEKKFKLKK…CGGEGIEYGE (83 aa)). Zn(2+) is bound by residues Cys-165, Cys-168, Cys-182, Cys-185, Cys-208, Cys-211, Cys-222, and Cys-225. 4 CXXCXGXG motif repeats span residues 165-172 (CSHCHGTG), 182-189 (CPTCKGSG), 208-215 (CPTCNGEG), and 222-229 (CKVCGGEG).

It belongs to the DnaJ family. Homodimer. It depends on Zn(2+) as a cofactor.

The protein localises to the cytoplasm. Its function is as follows. Participates actively in the response to hyperosmotic and heat shock by preventing the aggregation of stress-denatured proteins and by disaggregating proteins, also in an autonomous, DnaK-independent fashion. Unfolded proteins bind initially to DnaJ; upon interaction with the DnaJ-bound protein, DnaK hydrolyzes its bound ATP, resulting in the formation of a stable complex. GrpE releases ADP from DnaK; ATP binding to DnaK triggers the release of the substrate protein, thus completing the reaction cycle. Several rounds of ATP-dependent interactions between DnaJ, DnaK and GrpE are required for fully efficient folding. Also involved, together with DnaK and GrpE, in the DNA replication of plasmids through activation of initiation proteins. In Bacteroides fragilis (strain YCH46), this protein is Chaperone protein DnaJ.